Reading from the N-terminus, the 196-residue chain is Histone H1.0-B (196 aa).

Disordered stretches follow at residues 1–29 and 86–196; these read MAENSAATPAAKPKRSKALKKSTDHPKYS and GVGA…GRKK. The H15 domain maps to 24 to 97; the sequence is DHPKYSDMIL…GASGSFRLAK (74 aa). Basic residues predominate over residues 104–196; sequence PAKKPKKEIK…ASPKKSGRKK (93 aa).

The protein belongs to the histone H1/H5 family.

The protein resides in the nucleus. Its subcellular location is the chromosome. Functionally, histones H1 are necessary for the condensation of nucleosome chains into higher-order structures. The histones H1.0 are found in cells that are in terminal stages of differentiation or that have low rates of cell division. The protein is Histone H1.0-B (h1-0-b) of Xenopus laevis (African clawed frog).